Reading from the N-terminus, the 140-residue chain is Nucleoside diphosphate kinase (140 aa).

Lys11, Phe59, Arg87, Thr93, Arg104, and Asn114 together coordinate ATP. The active-site Pros-phosphohistidine intermediate is the His117.

It belongs to the NDK family. As to quaternary structure, homotetramer. Requires Mg(2+) as cofactor.

Its subcellular location is the cytoplasm. It catalyses the reaction a 2'-deoxyribonucleoside 5'-diphosphate + ATP = a 2'-deoxyribonucleoside 5'-triphosphate + ADP. It carries out the reaction a ribonucleoside 5'-diphosphate + ATP = a ribonucleoside 5'-triphosphate + ADP. Its function is as follows. Major role in the synthesis of nucleoside triphosphates other than ATP. The ATP gamma phosphate is transferred to the NDP beta phosphate via a ping-pong mechanism, using a phosphorylated active-site intermediate. The polypeptide is Nucleoside diphosphate kinase (Rhodospirillum centenum (strain ATCC 51521 / SW)).